A 294-amino-acid chain; its full sequence is Non-selective voltage-gated ion channel VDAC2 (294 aa).

Residue Ala-2 is modified to N-acetylalanine. Residues Lys-23 and Lys-31 each contribute to the ATP site. Position 31 is an N6-acetyllysine; alternate (Lys-31). At Lys-31 the chain carries N6-succinyllysine; alternate. Lys-31 is covalently cross-linked (Glycyl lysine isopeptide (Lys-Gly) (interchain with G-Cter in ubiquitin); alternate). A run of 2 beta stranded transmembrane segments spans residues 37–46 and 50–58; these read LVKLDVKTKS and VEFSTSGSS. Residue Lys-64 forms a Glycyl lysine isopeptide (Lys-Gly) (interchain with G-Cter in ubiquitin) linkage. The chain crosses the membrane as a beta stranded span at residues 65-75; it reads VTGTLETKYKW. Tyr-78 bears the Phosphotyrosine mark. Beta stranded transmembrane passes span 80–87, 91–100, and 106–115; these read LTFTEKWN, TLGTEIAIED, and LKLTFDTTFS. A Phosphothreonine modification is found at Thr-118. An N6-acetyllysine; alternate modification is found at Lys-120. Lys-120 participates in a covalent cross-link: Glycyl lysine isopeptide (Lys-Gly) (interchain with G-Cter in ubiquitin); alternate. Residue Lys-121 forms a Glycyl lysine isopeptide (Lys-Gly) (interchain with G-Cter in ubiquitin) linkage. Transmembrane regions (beta stranded) follow at residues 122–131, 134–141, 148–156, and 161–169; these read SGKIKSSYKR, VNLGCDVD, AIHGSAVFG, and LAGYQMTFD. Lys-172 is covalently cross-linked (Glycyl lysine isopeptide (Lys-Gly) (interchain with G-Cter in ubiquitin)). The next 6 membrane-spanning stretches (beta stranded) occupy residues 174–186, 189–196, 200–209, 213–222, 229–238, and 242–249; these read KLTR…GYRT, FQLHTNVN, EFGGSIYQKV, LDTSVNLAWT, RFGIAAKYQL, and ASISAKVN. Phosphoserine is present on Ser-251. NAD(+) is bound by residues 253–255 and 271–275; these read LIG and SALVD. Beta stranded transmembrane passes span 253 to 262 and 265 to 274; these read LIGVGYTQTL and GVKLTLSALV. Position 277 is an N6-acetyllysine; alternate (Lys-277). Lys-277 participates in a covalent cross-link: Glycyl lysine isopeptide (Lys-Gly) (interchain with G-Cter in ubiquitin); alternate. The beta stranded transmembrane segment at 284–293 threads the bilayer; it reads HKLGLALELE.

Belongs to the eukaryotic mitochondrial porin family. Monomer, homodimer and higher order oligomers; formation of higher order structures is necessary for scramblase activity. Interacts with ARMC12 in a TBC1D21-dependent manner. Interacts with KLC3. Interacts with SPATA33. Interacts with PPP3CC in a SPATA33-dependent manner. Ubiquitinated by PRKN during mitophagy, leading to its degradation and enhancement of mitophagy. Deubiquitinated by USP30.

Its subcellular location is the mitochondrion outer membrane. It is found in the membrane. The catalysed reaction is chloride(in) = chloride(out). It carries out the reaction K(+)(in) = K(+)(out). The enzyme catalyses a 1,2-diacyl-sn-glycero-3-phospho-L-serine(in) = a 1,2-diacyl-sn-glycero-3-phospho-L-serine(out). It catalyses the reaction a 1,2-diacyl-sn-glycero-3-phosphocholine(in) = a 1,2-diacyl-sn-glycero-3-phosphocholine(out). The catalysed reaction is a 1,2-diacyl-sn-glycero-3-phospho-(1D-myo-inositol)(in) = a 1,2-diacyl-sn-glycero-3-phospho-(1D-myo-inositol)(out). Its function is as follows. Non-selective voltage-gated ion channel that mediates the transport of anions and cations through the mitochondrion outer membrane and plasma membrane. The channel adopts an open conformation at zero mV and a closed conformation at both positive and negative potentials. There are two populations of channels; the main that functions in a lower open-state conductance with lower ion selectivity, that switch, in a voltage-dependent manner, from the open to a low-conducting 'closed' state and the other that has a normal ion selectivity in the typical high conductance, 'open' state. Binds various lipids, including the sphingolipid ceramide, the phospholipid phosphatidylcholine, and the sterols cholesterol and oxysterol. Binding of ceramide promotes the mitochondrial outer membrane permeabilization (MOMP) apoptotic pathway. Functionally, catalyzes the scrambling of phospholipids across the outer mitochondrial membrane; the mechanism is unrelated to channel activity and is capable of translocating both anionic and zwitterionic phospholipids. This is Non-selective voltage-gated ion channel VDAC2 from Sus scrofa (Pig).